The primary structure comprises 83 residues: Small ribosomal subunit protein bS16 (83 aa).

It belongs to the bacterial ribosomal protein bS16 family.

The sequence is that of Small ribosomal subunit protein bS16 from Pseudomonas putida (strain W619).